The following is a 164-amino-acid chain: UPF0262 protein Xaut_1232 (164 aa).

The protein belongs to the UPF0262 family.

The polypeptide is UPF0262 protein Xaut_1232 (Xanthobacter autotrophicus (strain ATCC BAA-1158 / Py2)).